The primary structure comprises 308 residues: Porphobilinogen deaminase (308 aa).

At cysteine 241 the chain carries S-(dipyrrolylmethanemethyl)cysteine.

This sequence belongs to the HMBS family. In terms of assembly, monomer. Dipyrromethane serves as cofactor.

It carries out the reaction 4 porphobilinogen + H2O = hydroxymethylbilane + 4 NH4(+). It participates in porphyrin-containing compound metabolism; protoporphyrin-IX biosynthesis; coproporphyrinogen-III from 5-aminolevulinate: step 2/4. Its function is as follows. Tetrapolymerization of the monopyrrole PBG into the hydroxymethylbilane pre-uroporphyrinogen in several discrete steps. This chain is Porphobilinogen deaminase, found in Staphylococcus aureus (strain MSSA476).